The following is a 335-amino-acid chain: tRNA N6-adenosine threonylcarbamoyltransferase (335 aa).

2 residues coordinate Fe cation: His-110 and His-114. Residues 132-136 (LVSGG), Asp-165, Gly-178, and Asn-271 each bind substrate. Position 299 (Asp-299) interacts with Fe cation.

The protein belongs to the KAE1 / TsaD family. Requires Fe(2+) as cofactor.

It is found in the cytoplasm. The enzyme catalyses L-threonylcarbamoyladenylate + adenosine(37) in tRNA = N(6)-L-threonylcarbamoyladenosine(37) in tRNA + AMP + H(+). In terms of biological role, required for the formation of a threonylcarbamoyl group on adenosine at position 37 (t(6)A37) in tRNAs that read codons beginning with adenine. Is involved in the transfer of the threonylcarbamoyl moiety of threonylcarbamoyl-AMP (TC-AMP) to the N6 group of A37, together with TsaE and TsaB. TsaD likely plays a direct catalytic role in this reaction. The protein is tRNA N6-adenosine threonylcarbamoyltransferase of Campylobacter jejuni subsp. jejuni serotype O:6 (strain 81116 / NCTC 11828).